We begin with the raw amino-acid sequence, 428 residues long: Enolase (428 aa).

Gln163 lines the (2R)-2-phosphoglycerate pocket. The Proton donor role is filled by Glu205. Positions 242, 285, and 311 each coordinate Mg(2+). (2R)-2-phosphoglycerate-binding residues include Lys336, Arg365, Ser366, and Lys387. Lys336 serves as the catalytic Proton acceptor.

This sequence belongs to the enolase family. Mg(2+) is required as a cofactor.

It is found in the cytoplasm. It localises to the secreted. Its subcellular location is the cell surface. The catalysed reaction is (2R)-2-phosphoglycerate = phosphoenolpyruvate + H2O. It functions in the pathway carbohydrate degradation; glycolysis; pyruvate from D-glyceraldehyde 3-phosphate: step 4/5. Its function is as follows. Catalyzes the reversible conversion of 2-phosphoglycerate (2-PG) into phosphoenolpyruvate (PEP). It is essential for the degradation of carbohydrates via glycolysis. The chain is Enolase from Desulfatibacillum aliphaticivorans.